A 116-amino-acid polypeptide reads, in one-letter code: MKTRTEQRRLRHKRIVKKIRATNHDNRVVLMVIKSLNHISVQAWDFSQNIVLASSSSLALKLKNGNKDNAKLVGQDIADKLVKLKLTNVVFDTGGSKYHGRIAALAEAARERGLNF.

This sequence belongs to the universal ribosomal protein uL18 family. Part of the 50S ribosomal subunit; part of the 5S rRNA/L5/L18/L25 subcomplex. Contacts the 5S and 23S rRNAs.

Its function is as follows. This is one of the proteins that bind and probably mediate the attachment of the 5S RNA into the large ribosomal subunit, where it forms part of the central protuberance. The polypeptide is Large ribosomal subunit protein uL18 (Mycoplasma pneumoniae (strain ATCC 29342 / M129 / Subtype 1) (Mycoplasmoides pneumoniae)).